Here is a 409-residue protein sequence, read N- to C-terminus: Argininosuccinate synthase (409 aa).

Residues 8-16 (AYSGGLDTS) and Ala34 contribute to the ATP site. Residue Tyr85 participates in L-citrulline binding. Gly115 is an ATP binding site. L-aspartate is bound by residues Thr117, Asn121, and Asp122. Asn121 contributes to the L-citrulline binding site. 5 residues coordinate L-citrulline: Arg125, Ser178, Ser187, Glu268, and Tyr280.

The protein belongs to the argininosuccinate synthase family. Type 1 subfamily. Homotetramer.

It localises to the cytoplasm. It catalyses the reaction L-citrulline + L-aspartate + ATP = 2-(N(omega)-L-arginino)succinate + AMP + diphosphate + H(+). It functions in the pathway amino-acid biosynthesis; L-arginine biosynthesis; L-arginine from L-ornithine and carbamoyl phosphate: step 2/3. The polypeptide is Argininosuccinate synthase (Thermotoga sp. (strain RQ2)).